Consider the following 302-residue polypeptide: N-acetylmuramic acid 6-phosphate etherase (302 aa).

In terms of domain architecture, SIS spans 58–221 (IGEAFLNGGR…STGAMVKTGK (164 aa)). Glu86 functions as the Proton donor in the catalytic mechanism. The active site involves Glu117.

The protein belongs to the GCKR-like family. MurNAc-6-P etherase subfamily. Homodimer.

The enzyme catalyses N-acetyl-D-muramate 6-phosphate + H2O = N-acetyl-D-glucosamine 6-phosphate + (R)-lactate. Its pathway is amino-sugar metabolism; N-acetylmuramate degradation. Functionally, specifically catalyzes the cleavage of the D-lactyl ether substituent of MurNAc 6-phosphate, producing GlcNAc 6-phosphate and D-lactate. This chain is N-acetylmuramic acid 6-phosphate etherase, found in Clostridium botulinum (strain Hall / ATCC 3502 / NCTC 13319 / Type A).